The sequence spans 310 residues: Protein-L-isoaspartate O-methyltransferase (310 aa).

2 disordered regions span residues Met1–Ala44 and Ala67–Pro88. Over residues Glu14 to Glu29 the composition is skewed to basic and acidic residues. Over residues Ala32–Ala44 the composition is skewed to low complexity. Residues Pro75–Ala86 show a composition bias toward pro residues. Residue Ser157 is part of the active site.

Belongs to the methyltransferase superfamily. L-isoaspartyl/D-aspartyl protein methyltransferase family.

It localises to the cytoplasm. It carries out the reaction [protein]-L-isoaspartate + S-adenosyl-L-methionine = [protein]-L-isoaspartate alpha-methyl ester + S-adenosyl-L-homocysteine. Its function is as follows. Catalyzes the methyl esterification of L-isoaspartyl residues in peptides and proteins that result from spontaneous decomposition of normal L-aspartyl and L-asparaginyl residues. It plays a role in the repair and/or degradation of damaged proteins. This Burkholderia orbicola (strain MC0-3) protein is Protein-L-isoaspartate O-methyltransferase.